A 1257-amino-acid polypeptide reads, in one-letter code: Stromal processing peptidase, chloroplastic (1257 aa).

The N-terminal 142 residues, 1–142, are a transit peptide targeting the chloroplast; that stretch reads MAASTSTSSL…ASVKRVQLPH (142 aa). Residue His-236 coordinates Zn(2+). The active-site Proton acceptor is the Glu-239. A Zn(2+)-binding site is contributed by His-240. Glu-309 is a catalytic residue. Glu-316 contributes to the Zn(2+) binding site. The disordered stretch occupies residues 1233-1257; it reads EEAGEGYPGVLPMGRGLSTMTRPTT.

The protein belongs to the peptidase M16 family. Zn(2+) is required as a cofactor.

Its subcellular location is the plastid. The protein localises to the chloroplast stroma. Functionally, cleaves presequences (transit peptides) from chloroplastic protein precursors. Initially recognizes a precursor by binding to the C-terminus of its transit peptide and then removes the transit peptide in a single endoproteolytic step. In a next step, pursues the cleavage of transit peptide to a subfragment form. The polypeptide is Stromal processing peptidase, chloroplastic (Pisum sativum (Garden pea)).